Reading from the N-terminus, the 493-residue chain is Cytochrome c-552 (493 aa).

Residues 1–25 (MEKKLKSWQGWLLFCGAMAVVFVLG) form the signal peptide. Residue His116 participates in heme c binding. Residues Cys144, Cys147, and Lys148 each coordinate heme. Heme c-binding residues include Cys182, Cys185, His186, Cys224, Cys227, and His228. 4 residues coordinate Ca(2+): Glu230, Tyr231, Lys276, and Gln278. Substrate is bound at residue Tyr231. His279 is a substrate binding site. His290, Cys297, Cys300, His301, His315, Cys328, Cys331, His332, and His407 together coordinate heme c.

It belongs to the cytochrome c-552 family. Ca(2+) serves as cofactor. The cofactor is heme c.

The protein localises to the periplasm. It carries out the reaction 6 Fe(III)-[cytochrome c] + NH4(+) + 2 H2O = 6 Fe(II)-[cytochrome c] + nitrite + 8 H(+). It participates in nitrogen metabolism; nitrate reduction (assimilation). In terms of biological role, catalyzes the reduction of nitrite to ammonia, consuming six electrons in the process. In Bacteroides fragilis (strain ATCC 25285 / DSM 2151 / CCUG 4856 / JCM 11019 / LMG 10263 / NCTC 9343 / Onslow / VPI 2553 / EN-2), this protein is Cytochrome c-552.